The chain runs to 173 residues: Xanthine-guanine phosphoribosyltransferase (173 aa).

Residues 48 to 49 and 107 to 115 each bind 5-phospho-alpha-D-ribose 1-diphosphate; these read RG and DDLVDTGKT. Asp-108 is a Mg(2+) binding site. Residues Asp-111 and Ile-154 each coordinate guanine. Residues Asp-111 and Ile-154 each coordinate xanthine. Residues 111–115 and 153–154 contribute to the GMP site; these read DTGKT and WI.

Belongs to the purine/pyrimidine phosphoribosyltransferase family. XGPT subfamily. As to quaternary structure, homotetramer. It depends on Mg(2+) as a cofactor.

Its subcellular location is the cell inner membrane. It catalyses the reaction GMP + diphosphate = guanine + 5-phospho-alpha-D-ribose 1-diphosphate. The catalysed reaction is XMP + diphosphate = xanthine + 5-phospho-alpha-D-ribose 1-diphosphate. The enzyme catalyses IMP + diphosphate = hypoxanthine + 5-phospho-alpha-D-ribose 1-diphosphate. The protein operates within purine metabolism; GMP biosynthesis via salvage pathway; GMP from guanine: step 1/1. It functions in the pathway purine metabolism; XMP biosynthesis via salvage pathway; XMP from xanthine: step 1/1. Its function is as follows. Purine salvage pathway enzyme that catalyzes the transfer of the ribosyl-5-phosphate group from 5-phospho-alpha-D-ribose 1-diphosphate (PRPP) to the N9 position of the 6-oxopurines guanine and xanthine to form the corresponding ribonucleotides GMP (guanosine 5'-monophosphate) and XMP (xanthosine 5'-monophosphate), with the release of PPi. To a lesser extent, also acts on hypoxanthine. This Rhodopseudomonas palustris (strain ATCC BAA-98 / CGA009) protein is Xanthine-guanine phosphoribosyltransferase.